We begin with the raw amino-acid sequence, 358 residues long: S-adenosylmethionine:tRNA ribosyltransferase-isomerase (358 aa).

The protein belongs to the QueA family. Monomer.

The protein localises to the cytoplasm. The catalysed reaction is 7-aminomethyl-7-carbaguanosine(34) in tRNA + S-adenosyl-L-methionine = epoxyqueuosine(34) in tRNA + adenine + L-methionine + 2 H(+). It functions in the pathway tRNA modification; tRNA-queuosine biosynthesis. Functionally, transfers and isomerizes the ribose moiety from AdoMet to the 7-aminomethyl group of 7-deazaguanine (preQ1-tRNA) to give epoxyqueuosine (oQ-tRNA). The polypeptide is S-adenosylmethionine:tRNA ribosyltransferase-isomerase (Desulfotalea psychrophila (strain LSv54 / DSM 12343)).